The sequence spans 719 residues: Protein psiI (719 aa).

Positions 1-19 are cleaved as a signal peptide; the sequence is MKIIFNLLILFSLVNFINS. At 20–658 the chain is on the extracellular side; it reads QSTTQATTLK…ICQTGAIVST (639 aa). N62, N105, N118, N151, N315, N379, N454, N488, N500, N538, N592, and N629 each carry an N-linked (GlcNAc...) asparagine glycan. Residues 119–261 enclose the PA14 domain; that stretch reads LTLNPSTGTY…YDYCGVCYGD (143 aa). The chain crosses the membrane as a helical span at residues 659–679; the sequence is AVVASVVVVGAVVLGAAIFAG. Topologically, residues 680-719 are cytoplasmic; it reads KKGYDHWKANQGQVFASSNANPLYQQSNNGGENALFEAPQ.

This sequence belongs to the prespore-cell-inducing factor family.

It localises to the membrane. The sequence is that of Protein psiI (psiI) from Dictyostelium discoideum (Social amoeba).